We begin with the raw amino-acid sequence, 193 residues long: Annexin-2 receptor (193 aa).

Over residues 78–87 (QSTLEPSTAK) the composition is skewed to polar residues. Residues 78 to 111 (QSTLEPSTAKPTEFSWPGTQKQQEAPVEEVGQAE) are disordered.

As to expression, widely expressed. Highly expressed in lymphocytes. Expressed in both resting CD4(+) and CD8(+) T-cells.

May act as a receptor for annexin II on marrow stromal cells to induce osteoclast formation. The protein is Annexin-2 receptor (ANXA2R) of Homo sapiens (Human).